Consider the following 323-residue polypeptide: Elongation factor P--(R)-beta-lysine ligase (323 aa).

74 to 76 (SPE) is a substrate binding site. ATP-binding positions include 98-100 (RNE) and asparagine 107. Tyrosine 116 is a substrate binding site. 242–243 (EL) provides a ligand contact to ATP. Residue glutamate 249 participates in substrate binding. An ATP-binding site is contributed by glycine 298.

Belongs to the class-II aminoacyl-tRNA synthetase family. EpmA subfamily. Homodimer.

It carries out the reaction D-beta-lysine + L-lysyl-[protein] + ATP = N(6)-((3R)-3,6-diaminohexanoyl)-L-lysyl-[protein] + AMP + diphosphate + H(+). With EpmB is involved in the beta-lysylation step of the post-translational modification of translation elongation factor P (EF-P). Catalyzes the ATP-dependent activation of (R)-beta-lysine produced by EpmB, forming a lysyl-adenylate, from which the beta-lysyl moiety is then transferred to the epsilon-amino group of a conserved specific lysine residue in EF-P. The polypeptide is Elongation factor P--(R)-beta-lysine ligase (Vibrio vulnificus (strain YJ016)).